The chain runs to 51 residues: Insulin (51 aa).

3 disulfide bridges follow: Cys-8–Cys-37, Cys-20–Cys-50, and Cys-36–Cys-41.

It belongs to the insulin family. Heterodimer of a B chain and an A chain linked by two disulfide bonds.

It is found in the secreted. In terms of biological role, insulin decreases blood glucose concentration. It increases cell permeability to monosaccharides, amino acids and fatty acids. It accelerates glycolysis, the pentose phosphate cycle, and glycogen synthesis in liver. This is Insulin from Pagrus major (Red sea bream).